The primary structure comprises 107 residues: Multidrug resistance protein mmr (107 aa).

Helical transmembrane passes span 2 to 19 (TYLF…ATSL), 29 to 51 (LWPT…VSIS), 58 to 80 (VAYA…LFLG), and 84 to 106 (SVTK…LTGA).

The protein belongs to the drug/metabolite transporter (DMT) superfamily. Small multidrug resistance (SMR) (TC 2.A.7.1) family. Mmr subfamily.

Its subcellular location is the cell membrane. Multidrug efflux pump. Confers resistance to tetraphenylphosphonium (TPP), erythromycin, ethidium bromide, acriflavine, safranin O and pyronin Y. The sequence is that of Multidrug resistance protein mmr (mmr) from Mycolicibacterium paratuberculosis (strain ATCC BAA-968 / K-10) (Mycobacterium paratuberculosis).